The chain runs to 188 residues: Accessory gene regulator protein B (188 aa).

A run of 4 helical transmembrane segments spans residues 49–69 (VALL…YFFV), 82–102 (LLCH…IVHF), 104–124 (VSWT…ICYA), and 163–183 (YMQL…PIFF).

Belongs to the AgrB family.

Its subcellular location is the cell membrane. Functionally, essential for the production of a quorum sensing system signal molecule, the autoinducing peptide (AIP). This quorum sensing system is responsible for the regulation of the expression of virulence factor genes. Involved in the proteolytic processing of AgrD, the precursor of AIP. The protein is Accessory gene regulator protein B of Staphylococcus lugdunensis.